Reading from the N-terminus, the 620-residue chain is Translation initiation factor IF-2 (620 aa).

The region spanning 119 to 288 (ERPPIVTIMG…IILISELENL (170 aa)) is the tr-type G domain. Residues 128 to 135 (GHVDHGKT) form a G1 region. 128 to 135 (GHVDHGKT) is a binding site for GTP. The segment at 153–157 (GITQA) is G2. Residues 175–178 (DTPG) are G3. Residues 175–179 (DTPGH) and 229–232 (NKID) contribute to the GTP site. The tract at residues 229 to 232 (NKID) is G4. Residues 265–267 (SAI) are G5.

The protein belongs to the TRAFAC class translation factor GTPase superfamily. Classic translation factor GTPase family. IF-2 subfamily.

The protein localises to the cytoplasm. Functionally, one of the essential components for the initiation of protein synthesis. Protects formylmethionyl-tRNA from spontaneous hydrolysis and promotes its binding to the 30S ribosomal subunits. Also involved in the hydrolysis of GTP during the formation of the 70S ribosomal complex. The polypeptide is Translation initiation factor IF-2 (Mycoplasma capricolum subsp. capricolum (strain California kid / ATCC 27343 / NCTC 10154)).